Consider the following 256-residue polypeptide: Probable enoyl-CoA hydratase echA14 (256 aa).

Residues 235–256 (GPQAKSVQSPEFAARLAAAQHR) form a disordered region.

The protein belongs to the enoyl-CoA hydratase/isomerase family.

The catalysed reaction is a (3S)-3-hydroxyacyl-CoA = a (2E)-enoyl-CoA + H2O. It carries out the reaction a 4-saturated-(3S)-3-hydroxyacyl-CoA = a (3E)-enoyl-CoA + H2O. In terms of biological role, could possibly oxidize fatty acids using specific components. This chain is Probable enoyl-CoA hydratase echA14 (echA14), found in Mycobacterium tuberculosis (strain CDC 1551 / Oshkosh).